A 403-amino-acid polypeptide reads, in one-letter code: MTDLRLFTSESVTEGHPDKICDQISDSILDALLTQDPTSRAAVETLVTTGLVHVAGEVTTSGYVDIPQIVRDRIRDIGYDSSEVGFDGSNCGVTVSIGAQSPDIAQGVDRSYESRSGSASTDAHDLQGAGDQGLMFGYASRDTPVFMPLPIYLAHRLAERLAAVRHSGELAYLRPDGKTQVTIGYEGLVPRTVDTVVLSTQHGPQVSQEDLRREVEEHVIRPVLAAAAEIGIELDSRDATLLINPTGKFEIGGPKGDAGLTGRKIIVDTYGGFSRHGGGAFSGKDPSKVDRSAAYAMRWVAKNAVAAGLADRLEVQVAYAIGKAAPVGLYVETFGTAHVPEERIVRAIRETFDLRPAAIVERLDLLRPIYAQTAAYGHFGRELPDFTWEALDRVADLQSAAGL.

Histidine 16 lines the ATP pocket. Residue aspartate 18 coordinates Mg(2+). Residue glutamate 44 participates in K(+) binding. Glutamate 57 and glutamine 100 together coordinate L-methionine. The flexible loop stretch occupies residues 100-110 (QSPDIAQGVDR). A disordered region spans residues 106–126 (QGVDRSYESRSGSASTDAHDL). Residues 176 to 178 (DGK), 248 to 249 (KF), aspartate 257, 263 to 264 (RK), alanine 280, and lysine 284 each bind ATP. An L-methionine-binding site is contributed by aspartate 257. Lysine 288 lines the L-methionine pocket.

Belongs to the AdoMet synthase family. Homotetramer; dimer of dimers. It depends on Mg(2+) as a cofactor. The cofactor is K(+).

It is found in the cytoplasm. It carries out the reaction L-methionine + ATP + H2O = S-adenosyl-L-methionine + phosphate + diphosphate. It participates in amino-acid biosynthesis; S-adenosyl-L-methionine biosynthesis; S-adenosyl-L-methionine from L-methionine: step 1/1. Catalyzes the formation of S-adenosylmethionine (AdoMet) from methionine and ATP. The overall synthetic reaction is composed of two sequential steps, AdoMet formation and the subsequent tripolyphosphate hydrolysis which occurs prior to release of AdoMet from the enzyme. This is S-adenosylmethionine synthase from Clavibacter michiganensis subsp. michiganensis (strain NCPPB 382).